The primary structure comprises 681 residues: Hydroxyproline O-galactosyltransferase GALT6 (681 aa).

Over 1–28 (MRKPKLSKLERLEKFDIFVSLSKQRSVQ) the chain is Cytoplasmic. Residues 29-49 (ILMAVGLLYMLLITFEIPFVF) form a helical; Signal-anchor for type II membrane protein membrane-spanning segment. Over 50-681 (KTGLSSLSQD…TGKPQCCNMR (632 aa)) the chain is Lumenal. Residues 57-80 (SQDPLTRPEKHNSQRELQERRAPT) form a disordered region. Residues 62 to 78 (TRPEKHNSQRELQERRA) show a composition bias toward basic and acidic residues. Residues 187–401 (NIMELPCGLT…DIDVHSVFAG (215 aa)) enclose the Galectin domain. Asparagine 629 carries an N-linked (GlcNAc...) asparagine glycan.

It belongs to the glycosyltransferase 31 family. Mn(2+) serves as cofactor. Expressed in junveile leaves and stems, and at lower levels in cauline leaves and siliques.

It localises to the golgi apparatus membrane. It functions in the pathway protein modification; protein glycosylation. In terms of biological role, possesses hydroxyproline O-galactosyltransferase activity. Transfers galactose from UDP-galactose to hydroxyproline residues in the arabinogalactan proteins (AGPs). Is specific for AGPs containing non-contiguous peptidyl hydroxyproline residues. Utilizes UDP-galactose solely as sugar donor. The addition of galactose onto the peptidyl hydroxyproline residues in AGP core proteins represents the first committed step in arabinogalactan polysaccharide addition. AGP glycans play essential roles in both vegetative and reproductive plant growth. This is Hydroxyproline O-galactosyltransferase GALT6 from Arabidopsis thaliana (Mouse-ear cress).